A 283-amino-acid polypeptide reads, in one-letter code: Undecaprenyl-diphosphatase (283 aa).

The next 7 helical transmembrane spans lie at 40 to 60, 85 to 105, 113 to 133, 153 to 173, 193 to 213, 227 to 247, and 259 to 279; these read GAAFTAIVQIGTLAAVLIYFF, AKMGWMIAAGTIPIVIFGLLF, LRSLYWISGALIGLALLLTIA, IGWKDALLIGLIQSIALIPGS, AARFSFLLSLPSVLAAGVFQL, LIAIIVATIVSGIVGYASIAF, and VFIIYRLLLGSGILLMLATGM.

The protein belongs to the UppP family.

It is found in the cell inner membrane. The catalysed reaction is di-trans,octa-cis-undecaprenyl diphosphate + H2O = di-trans,octa-cis-undecaprenyl phosphate + phosphate + H(+). Functionally, catalyzes the dephosphorylation of undecaprenyl diphosphate (UPP). Confers resistance to bacitracin. This Chlorobium limicola (strain DSM 245 / NBRC 103803 / 6330) protein is Undecaprenyl-diphosphatase.